Consider the following 966-residue polypeptide: MTDTTLLDLLSDSKEFATRHNGSGAAQQKKMLETIGVQSIEQLIDQTVPAAIRLPEKMKLAEPQSESMTLASLKAIAEKNIVNRSFIGQGYYNTLLPNVILRNVLENPGWYTAYTPYQPEISQGRLESLLNYQQMVMDLTAMEIANASLLDEATAAAESMTLCKRAGKSKSLAFFVADGIHPQTVDVVRTRAEFFGYEIISGSMEDLDNHDLFGALLQYPSTTGNIQDLTAIIEKAHAKKTLVSVASDLLALTLLKAPGEMGADIVIGSAQRFGIPMGFGGPHAGFMATKEKFKRTMPGRIIGVSKDSKGKPALRMAMQTREQHIRREKATSNICTAQALLANMSAFYALYHGPEGLRKIARRVHHLTAILVAGLRSEGFELANQHFFDTITLNSNEHSKAIYHRALAEGMNLRKFPTPDNMPVQLGISLDETTTITDVEDLLRVITGKALSSAGFAAQVAEDEFAGIPATCRRRSKYLTHPIFNEHHSETQMMRYMKKLENKDYSLTHGMIPLGCCTMKLNAAALMLPVSWPEFSQMHPFAPTEQSFGYQELAEKLSKMLCEVTGYDGFSLQPNSGAQGEYAGLIAIHRYHQSNGEDQRNICLIPSSAHGTNPATASMLSMKVVVVGCDQQGNIDHADLKAKIDKHRDNLSCIMVTYPSTHGIYEEGIQEICEWVHEAGGQVYLDGANMNAQIGLTSPGFIGSDVSHLNLHKTFCIPHGGGGPGMGPIGVKKHLIPFLPGHIEVTESADNKHYAVSAAELGSASILPISYAYIAMMGEQGLTSATQIAILNANYIMERLRPHYPILYQGKEGRVAHECIIDIRPLEAASGISNEDIAKRLMDYGFHAPTMSFPVGGTFMIEPTESESTAELDRFCDAMIAIRHEIKQIEDGEWSATDNPLVNAPHTQVDLMESEWTHGYSRELACFPSKHSKDSKYWPTVNRVDNVFGDRNLICSCPSIESYMEE.

Lysine 713 carries the N6-(pyridoxal phosphate)lysine modification.

This sequence belongs to the GcvP family. In terms of assembly, the glycine cleavage system is composed of four proteins: P, T, L and H. Pyridoxal 5'-phosphate serves as cofactor.

It carries out the reaction N(6)-[(R)-lipoyl]-L-lysyl-[glycine-cleavage complex H protein] + glycine + H(+) = N(6)-[(R)-S(8)-aminomethyldihydrolipoyl]-L-lysyl-[glycine-cleavage complex H protein] + CO2. In terms of biological role, the glycine cleavage system catalyzes the degradation of glycine. The P protein binds the alpha-amino group of glycine through its pyridoxal phosphate cofactor; CO(2) is released and the remaining methylamine moiety is then transferred to the lipoamide cofactor of the H protein. This Psychromonas ingrahamii (strain DSM 17664 / CCUG 51855 / 37) protein is Glycine dehydrogenase (decarboxylating).